The primary structure comprises 353 residues: Photosystem II protein D1 (353 aa).

Thr-2 carries the post-translational modification N-acetylthreonine. Thr-2 is subject to Phosphothreonine. The next 3 membrane-spanning stretches (helical) occupy residues 29–46, 118–133, and 142–156; these read YIGW…TATS, HFLL…EWEL, and WIAV…AATA. His-118 contributes to the chlorophyll a binding site. Tyr-126 is a binding site for pheophytin a. 2 residues coordinate [CaMn4O5] cluster: Asp-170 and Glu-189. A helical transmembrane segment spans residues 197–218; that stretch reads FHMLGVAGVFGGSLFSAMHGSL. His-198 is a binding site for chlorophyll a. Residues His-215 and 264-265 each bind a quinone; that span reads SF. His-215 provides a ligand contact to Fe cation. Position 272 (His-272) interacts with Fe cation. A helical transmembrane segment spans residues 274 to 288; the sequence is FLAAWPVVGIWFTAL. Positions 332, 333, and 344 each coordinate [CaMn4O5] cluster. The propeptide occupies 345 to 353; sequence AIEAPAVNG.

This sequence belongs to the reaction center PufL/M/PsbA/D family. As to quaternary structure, PSII is composed of 1 copy each of membrane proteins PsbA, PsbB, PsbC, PsbD, PsbE, PsbF, PsbH, PsbI, PsbJ, PsbK, PsbL, PsbM, PsbT, PsbX, PsbY, PsbZ, Psb30/Ycf12, at least 3 peripheral proteins of the oxygen-evolving complex and a large number of cofactors. It forms dimeric complexes. The D1/D2 heterodimer binds P680, chlorophylls that are the primary electron donor of PSII, and subsequent electron acceptors. It shares a non-heme iron and each subunit binds pheophytin, quinone, additional chlorophylls, carotenoids and lipids. D1 provides most of the ligands for the Mn4-Ca-O5 cluster of the oxygen-evolving complex (OEC). There is also a Cl(-1) ion associated with D1 and D2, which is required for oxygen evolution. The PSII complex binds additional chlorophylls, carotenoids and specific lipids. is required as a cofactor. Post-translationally, tyr-161 forms a radical intermediate that is referred to as redox-active TyrZ, YZ or Y-Z. C-terminally processed by CTPA; processing is essential to allow assembly of the oxygen-evolving complex and thus photosynthetic growth.

The protein localises to the plastid. It localises to the chloroplast thylakoid membrane. It carries out the reaction 2 a plastoquinone + 4 hnu + 2 H2O = 2 a plastoquinol + O2. Functionally, photosystem II (PSII) is a light-driven water:plastoquinone oxidoreductase that uses light energy to abstract electrons from H(2)O, generating O(2) and a proton gradient subsequently used for ATP formation. It consists of a core antenna complex that captures photons, and an electron transfer chain that converts photonic excitation into a charge separation. The D1/D2 (PsbA/PsbD) reaction center heterodimer binds P680, the primary electron donor of PSII as well as several subsequent electron acceptors. This Conocephalum japonicum (Liverwort) protein is Photosystem II protein D1.